The sequence spans 41 residues: Augerpeptide-s11a (41 aa).

Post-translationally, contains 4 disulfide bonds. As to expression, expressed by the venom duct.

Its subcellular location is the secreted. Functionally, does not elicit any observable symptomatology in C.elegans. The protein is Augerpeptide-s11a of Terebra subulata (Chocolate spotted auger).